Reading from the N-terminus, the 284-residue chain is Protein phosphatase 1 regulatory subunit 3B (284 aa).

Positions 61 to 64 (RVSF) match the PP1-binding motif motif. A CBM21 domain is found at 124–232 (RNRLQTDHVC…SNKGKNYRII (109 aa)). Serine 260 is subject to Phosphoserine.

Interacts with glycogen, PPP1CC catalytic subunit of PP1 and PYGL. Associates with glycogen particles. Forms complexes with debranching enzyme, glycogen phosphorylase, glycogen synthase and phosphorylase kinase which is necessary for its regulation of PP1 activity.

Functionally, acts as a glycogen-targeting subunit for phosphatase PP1. Facilitates interaction of the PP1 with enzymes of the glycogen metabolism and regulates its activity. Suppresses the rate at which PP1 dephosphorylates (inactivates) glycogen phosphorylase and enhances the rate at which it activates glycogen synthase and therefore limits glycogen breakdown. Its activity is inhibited by PYGL, resulting in inhibition of the glycogen synthase and glycogen phosphorylase phosphatase activities of PP1. Dramatically increases basal and insulin-stimulated glycogen synthesis upon overexpression in hepatocytes. This is Protein phosphatase 1 regulatory subunit 3B (PPP1R3B) from Bos taurus (Bovine).